Consider the following 119-residue polypeptide: Basic phospholipase A2 DE-1 (119 aa).

Intrachain disulfides connect cysteine 11-cysteine 71, cysteine 26-cysteine 118, cysteine 28-cysteine 44, cysteine 43-cysteine 99, cysteine 50-cysteine 92, cysteine 60-cysteine 85, and cysteine 78-cysteine 90. Residues tyrosine 27, glycine 29, glycine 31, and aspartate 48 each coordinate Ca(2+). Residue aspartate 93 is part of the active site.

It belongs to the phospholipase A2 family. Group I subfamily. D49 sub-subfamily. Ca(2+) is required as a cofactor. As to expression, expressed by the venom gland.

The protein resides in the secreted. It carries out the reaction a 1,2-diacyl-sn-glycero-3-phosphocholine + H2O = a 1-acyl-sn-glycero-3-phosphocholine + a fatty acid + H(+). PLA2 catalyzes the calcium-dependent hydrolysis of the 2-acyl groups in 3-sn-phosphoglycerides. The sequence is that of Basic phospholipase A2 DE-1 from Hemachatus haemachatus (Rinkhals).